A 156-amino-acid chain; its full sequence is E3 ubiquitin-protein ligase LAP (156 aa).

The RING-CH-type zinc finger occupies 1-55 (MSDICWICNDVCDERNNFCGCNEEYKVVHIKCMQLWINYSKKKECNLCKTKYNIK). Topologically, residues 1–73 (MSDICWICND…WNWCFNDKKT (73 aa)) are cytoplasmic. Residues Cys5, Cys8, Cys19, Cys21, His29, Cys32, Cys45, and Cys48 each coordinate Zn(2+). A helical transmembrane segment spans residues 74–94 (TLFKIFFILFALVFIFLTITL). Residues 95 to 111 (SNDMANLVTGINDLICS) are Lumenal-facing. A helical membrane pass occupies residues 112–132 (IIFLIVYTVVMLTSICFSVFV). Topologically, residues 133-156 (VAIVVDFLLEAKEKNSFLTIREIV) are cytoplasmic.

The protein belongs to the poxviridae LAP protein family.

The protein localises to the host membrane. It is found in the host Golgi apparatus. The protein resides in the host trans-Golgi network membrane. Its subcellular location is the host early endosome membrane. It carries out the reaction S-ubiquitinyl-[E2 ubiquitin-conjugating enzyme]-L-cysteine + [acceptor protein]-L-lysine = [E2 ubiquitin-conjugating enzyme]-L-cysteine + N(6)-ubiquitinyl-[acceptor protein]-L-lysine.. Functionally, E3 ubiquitin-protein ligase which promotes ubiquitination and subsequent degradation of host MHC-I and CD4 molecules, presumably to prevent lysis of infected cells by cytotoxic T-lymphocytes and NK cell. Binds target molecules through transmembrane interaction. The result of this ubiquitination is the enhancement of the endocytosis of the target chain and the delivery to the lysosome, where it is proteolytically destroyed. In Yaba-like disease virus (YLDV), this protein is E3 ubiquitin-protein ligase LAP.